The chain runs to 380 residues: tRNA-specific 2-thiouridylase MnmA (380 aa).

ATP contacts are provided by residues 10-17 (AMSGGVDS) and Leu-36. Catalysis depends on Cys-106, which acts as the Nucleophile. Cys-106 and Cys-202 are disulfide-bonded. Gly-130 is an ATP binding site. The segment at 152 to 154 (KNQ) is interaction with tRNA. Residue Cys-202 is the Cysteine persulfide intermediate of the active site. The segment at 308–309 (RY) is interaction with tRNA.

Belongs to the MnmA/TRMU family.

It localises to the cytoplasm. It carries out the reaction S-sulfanyl-L-cysteinyl-[protein] + uridine(34) in tRNA + AH2 + ATP = 2-thiouridine(34) in tRNA + L-cysteinyl-[protein] + A + AMP + diphosphate + H(+). In terms of biological role, catalyzes the 2-thiolation of uridine at the wobble position (U34) of tRNA, leading to the formation of s(2)U34. This chain is tRNA-specific 2-thiouridylase MnmA, found in Leptospira biflexa serovar Patoc (strain Patoc 1 / Ames).